An 876-amino-acid polypeptide reads, in one-letter code: Alanine--tRNA ligase (876 aa).

The residue at position 74 (Lys74) is an N6-acetyllysine. Positions 564, 568, 666, and 670 each coordinate Zn(2+).

It belongs to the class-II aminoacyl-tRNA synthetase family. Homotetramer. The cofactor is Zn(2+).

The protein resides in the cytoplasm. It catalyses the reaction tRNA(Ala) + L-alanine + ATP = L-alanyl-tRNA(Ala) + AMP + diphosphate. Catalyzes the attachment of alanine to tRNA(Ala) in a two-step reaction: alanine is first activated by ATP to form Ala-AMP and then transferred to the acceptor end of tRNA(Ala). Also edits incorrectly charged Ser-tRNA(Ala) and Gly-tRNA(Ala) via its editing domain. The protein is Alanine--tRNA ligase of Escherichia coli O9:H4 (strain HS).